Here is a 329-residue protein sequence, read N- to C-terminus: Alpha-tubulin N-acetyltransferase 1 (329 aa).

Residues 5 to 185 form the N-acetyltransferase domain; the sequence is SQVALLPKLS…NNFVVFHRYF (181 aa). Residues 119–132 and 155–164 contribute to the acetyl-CoA site; these read FFVDTSFQRKGFGK and SVKFLAFLQK. Disordered regions lie at residues 218 to 261 and 306 to 329; these read PKYQ…GVGK and GARRRMSPTRSGVQYNIISGTPEH. The segment covering 220–229 has biased composition (polar residues); sequence YQSTTGPNNN. Pro residues predominate over residues 238-249; it reads TPPPPPLPPPLV. The span at 313–329 shows a compositional bias: polar residues; that stretch reads PTRSGVQYNIISGTPEH.

Belongs to the acetyltransferase ATAT1 family.

It catalyses the reaction L-lysyl-[alpha-tubulin] + acetyl-CoA = N(6)-acetyl-L-lysyl-[alpha-tubulin] + CoA + H(+). Specifically acetylates 'Lys-40' in alpha-tubulin on the lumenal side of microtubules. Promotes microtubule destabilization and accelerates microtubule dynamics; this activity may be independent of acetylation activity. Acetylates alpha-tubulin with a slow enzymatic rate, due to a catalytic site that is not optimized for acetyl transfer. Enters the microtubule through each end and diffuses quickly throughout the lumen of microtubules. Acetylates only long/old microtubules because of its slow acetylation rate since it does not have time to act on dynamically unstable microtubules before the enzyme is released. The protein is Alpha-tubulin N-acetyltransferase 1 of Trypanosoma cruzi (strain CL Brener).